A 250-amino-acid chain; its full sequence is 1-(5-phosphoribosyl)-5-[(5-phosphoribosylamino)methylideneamino] imidazole-4-carboxamide isomerase (250 aa).

Asp-8 acts as the Proton acceptor in catalysis. The active-site Proton donor is the Asp-129.

The protein belongs to the HisA/HisF family.

It localises to the cytoplasm. It catalyses the reaction 1-(5-phospho-beta-D-ribosyl)-5-[(5-phospho-beta-D-ribosylamino)methylideneamino]imidazole-4-carboxamide = 5-[(5-phospho-1-deoxy-D-ribulos-1-ylimino)methylamino]-1-(5-phospho-beta-D-ribosyl)imidazole-4-carboxamide. It participates in amino-acid biosynthesis; L-histidine biosynthesis; L-histidine from 5-phospho-alpha-D-ribose 1-diphosphate: step 4/9. This Desulfatibacillum aliphaticivorans protein is 1-(5-phosphoribosyl)-5-[(5-phosphoribosylamino)methylideneamino] imidazole-4-carboxamide isomerase.